The primary structure comprises 280 residues: Movement protein (280 aa).

A disordered region spans residues 248–267 (ESEELNVESPPAAIGSSSAS). The span at 255–267 (ESPPAAIGSSSAS) shows a compositional bias: low complexity.

This sequence belongs to the cucumovirus movement protein family.

Its subcellular location is the host cell junction. It localises to the host plasmodesma. Transports viral genome to neighboring plant cells directly through plasmosdesmata, without any budding. The movement protein allows efficient cell to cell propagation, by bypassing the host cell wall barrier. Acts by forming a tubular structure at the host plasmodesmata, enlarging it enough to allow free passage of virion capsids. The protein is Movement protein of Cucumis sativus (Cucumber).